The following is a 266-amino-acid chain: MENLNRGGFDFDLCNRNNVLEKTGLRMKGFMKTGTTIVGVVYKGGVVLGADTRATEGPIVADKNCEKIHYIADNIYCCGAGTAADTESATALISSKLKLHKLSTGKQTRVITALTMLKQMLFKYQGHISAALILGGIDINGPSLHTIYPHGSTDQLPYVTMGSGSLAAMAVFEAKYKNDMTKEEAIALVAEAISSGIFNDLGSGSNVDVTVIEPSGVTVLRNYQTPNERKFRNNPYIFKQGTTPVLKQDIAPLSTKVVIEDIMMGQ.

The propeptide at 1 to 34 (MENLNRGGFDFDLCNRNNVLEKTGLRMKGFMKTG) is removed in mature form. Threonine 35 functions as the Nucleophile in the catalytic mechanism.

The protein belongs to the peptidase T1B family. As to quaternary structure, the 26S proteasome consists of a 20S proteasome core and two 19S regulatory subunits. The 20S proteasome core is composed of 28 subunits that are arranged in four stacked rings, resulting in a barrel-shaped structure. The two end rings are each formed by seven alpha subunits, and the two central rings are each formed by seven beta subunits. The catalytic chamber with the active sites is on the inside of the barrel.

The protein resides in the cytoplasm. It is found in the nucleus. It carries out the reaction Cleavage of peptide bonds with very broad specificity.. Its function is as follows. The proteasome is a multicatalytic proteinase complex which is characterized by its ability to cleave peptides with Arg, Phe, Tyr, Leu, and Glu adjacent to the leaving group at neutral or slightly basic pH. The proteasome has an ATP-dependent proteolytic activity. The sequence is that of Proteasome subunit beta type-7 (psmB7) from Dictyostelium discoideum (Social amoeba).